We begin with the raw amino-acid sequence, 88 residues long: UPF0237 protein SMU_72 (88 aa).

Residues isoleucine 4–glutamine 77 enclose the ACT domain.

It belongs to the UPF0237 family. Homodimer.

This Streptococcus mutans serotype c (strain ATCC 700610 / UA159) protein is UPF0237 protein SMU_72.